We begin with the raw amino-acid sequence, 492 residues long: MLLLGLLLLTALAGARLLWNKWKYRSLHLPPLAPGFLHLLQPDLPIYLLGLTQKLGPVYRLRLGLQDVVVLNSKRTIEEAMIRRWVDFAGRPQMPSYKLVSQPYQDLSLGDYSLLWKAHKKLTRSALLLGIRNSMEPLVEQLTQEFCERMRAQAGTPVAIQKEFSFLTCSVICCLTFGDKEDTLVHAFHDCVQDLMKSWEHWSIQVLDIVPFLRFFPNPGLQRLKQALENRDRIVEKQLRQHKDSMVAGQWRDMTDYMLQGMGKPRAEKGHGRLLEGHVHMSVVDLFIGGTETTATTLSWAVAFLLHHPEIQQRLQEELDCELGPGASGSRVPLKDPSRLPLLTATIAEVLRLRPVVPLALPHRTTRHSSILGYDIPEGTVVIPNLQGAHLDDTVWEQPHEFRPDRFLVPGASPRVLAFGCGARVCLGEPLARLELFVVLARLLHAFTLLPPTGPLPSLRPRSHCGINLTMQPFQVQLQPRGAVAPGPSQHQ.

Heme b contacts are provided by Arg-91 and Lys-120. Arg-231 provides a ligand contact to 17alpha-hydroxyprogesterone. Arg-231 contributes to the progesterone binding site. The heme b site is built by His-363, Arg-424, and Cys-426.

Belongs to the cytochrome P450 family. Requires heme b as cofactor.

Its subcellular location is the endoplasmic reticulum membrane. It is found in the microsome membrane. It carries out the reaction 17alpha-hydroxyprogesterone + reduced [NADPH--hemoprotein reductase] + O2 = 11-deoxycortisol + oxidized [NADPH--hemoprotein reductase] + H2O + H(+). The enzyme catalyses progesterone + reduced [NADPH--hemoprotein reductase] + O2 = 21-hydroxyprogesterone + oxidized [NADPH--hemoprotein reductase] + H2O + H(+). Specifically catalyzes the 21-hydroxylation of steroids. Required for the adrenal synthesis of mineralocorticoids and glucocorticoids. In Lynx lynx (Eurasian lynx), this protein is Steroid 21-hydroxylase (CYP21).